The following is a 338-amino-acid chain: Fructose-1,6-bisphosphatase class 1 (338 aa).

Residues glutamate 90, aspartate 112, leucine 114, and aspartate 115 each contribute to the Mg(2+) site. Residues 115–118 (DGSS), asparagine 207, and lysine 273 each bind substrate. Glutamate 279 provides a ligand contact to Mg(2+).

The protein belongs to the FBPase class 1 family. Homotetramer. It depends on Mg(2+) as a cofactor.

It is found in the cytoplasm. It carries out the reaction beta-D-fructose 1,6-bisphosphate + H2O = beta-D-fructose 6-phosphate + phosphate. It functions in the pathway carbohydrate biosynthesis; gluconeogenesis. This is Fructose-1,6-bisphosphatase class 1 from Xanthomonas campestris pv. campestris (strain 8004).